The primary structure comprises 857 residues: Leucine--tRNA ligase (857 aa).

The 'HIGH' region motif lies at 42 to 52; sequence PYPSGNLHMGH. The 'KMSKS' region signature appears at 615–619; the sequence is KMSKS. An ATP-binding site is contributed by Lys-618.

It belongs to the class-I aminoacyl-tRNA synthetase family.

It is found in the cytoplasm. The enzyme catalyses tRNA(Leu) + L-leucine + ATP = L-leucyl-tRNA(Leu) + AMP + diphosphate. The protein is Leucine--tRNA ligase of Thermosynechococcus vestitus (strain NIES-2133 / IAM M-273 / BP-1).